A 118-amino-acid chain; its full sequence is Small ribosomal subunit protein uS13 (118 aa).

The segment at Ser-94 to Lys-118 is disordered.

The protein belongs to the universal ribosomal protein uS13 family. In terms of assembly, part of the 30S ribosomal subunit. Forms a loose heterodimer with protein S19. Forms two bridges to the 50S subunit in the 70S ribosome.

Its function is as follows. Located at the top of the head of the 30S subunit, it contacts several helices of the 16S rRNA. In the 70S ribosome it contacts the 23S rRNA (bridge B1a) and protein L5 of the 50S subunit (bridge B1b), connecting the 2 subunits; these bridges are implicated in subunit movement. Contacts the tRNAs in the A and P-sites. In Actinobacillus pleuropneumoniae serotype 5b (strain L20), this protein is Small ribosomal subunit protein uS13.